The following is a 344-amino-acid chain: Methionine import ATP-binding protein MetN 1 (344 aa).

The region spanning 2–241 (IELRNLSQRF…PHHEVTRALI (240 aa)) is the ABC transporter domain. Position 38-45 (38-45 (GRSGAGKS)) interacts with ATP.

The protein belongs to the ABC transporter superfamily. Methionine importer (TC 3.A.1.24) family. The complex is composed of two ATP-binding proteins (MetN), two transmembrane proteins (MetI) and a solute-binding protein (MetQ).

It is found in the cell inner membrane. The enzyme catalyses L-methionine(out) + ATP + H2O = L-methionine(in) + ADP + phosphate + H(+). It carries out the reaction D-methionine(out) + ATP + H2O = D-methionine(in) + ADP + phosphate + H(+). Its function is as follows. Part of the ABC transporter complex MetNIQ involved in methionine import. Responsible for energy coupling to the transport system. The sequence is that of Methionine import ATP-binding protein MetN 1 from Burkholderia ambifaria (strain ATCC BAA-244 / DSM 16087 / CCUG 44356 / LMG 19182 / AMMD) (Burkholderia cepacia (strain AMMD)).